The primary structure comprises 363 residues: MKVTVLASAILALINGALALPANAPTLDVTLTQVDNTRIKATVKNIGNEEVTFVHLNFFQDAAPVKKVSLFRNATEVEFTGIKRRYLTEGLSDDALTTLAAGATFEDEFDIASTADLTEGGTVTIRTDGVVPMATDRKVSGYIPYQSNELEIEVDAAKAATVPQAIKLLDRRTKVASCSGSRASALSTALRNTVSLANAAASAASSGSSARFQEYFRTTSSSTRNAVAARFRAIANEASSQSSGKTTYYCTDPYGYCDSNTLAFCLPSSNVIANCDLYYSDLPALTRSCHAQDQATTSLHEFTHAPGVYSPGTDDFAYGYRASTALSASQALLNADNYALFANGTPPSFPSPHPLSSAQTNMV.

The N-terminal stretch at 1–19 (MKVTVLASAILALINGALA) is a signal peptide. Residues 20–172 (LPANAPTLDV…PQAIKLLDRR (153 aa)) constitute a propeptide that is removed on maturation. Disulfide bonds link C178–C250 and C257–C275. Residue H300 participates in Zn(2+) binding. Residue E301 is part of the active site. The Zn(2+) site is built by H304 and D315.

Belongs to the peptidase M35 family. It depends on Zn(2+) as a cofactor.

Its subcellular location is the secreted. It carries out the reaction Preferential cleavage of bonds with hydrophobic residues in P1'. Also 3-Asn-|-Gln-4 and 8-Gly-|-Ser-9 bonds in insulin B chain.. Its function is as follows. Secreted metalloproteinase that allows assimilation of proteinaceous substrates. Shows high activities on basic nuclear substrates such as histone and protamine. This chain is Neutral protease 2 homolog NFIA_102630, found in Neosartorya fischeri (strain ATCC 1020 / DSM 3700 / CBS 544.65 / FGSC A1164 / JCM 1740 / NRRL 181 / WB 181) (Aspergillus fischerianus).